The chain runs to 286 residues: MKIIHAVHEMQDYSEALRKAGRRIAFVPTMGYFHEGHLDLMREGRKRSDCLVVSIYVNPTQFGASEDLEKYPRNFDRDSQLAEEVGVDVIFFPSNAEMYPVNYQTYVTVEEVTKNLCGLSRPGHFRGVATVCAKLFNMVKPHAAIFGKKDFQQLVTIKRMVADLNMDLEIVGMPTTREKDGLAMSSRNVYLSPEERESALCLSRSLLMARERYDQGERDAGRILQSIKAYIESVPSTRIDYLKICSTTTMQDVQSLDQESVLALAVFVGSTRLIDNHVFGEELNIR.

30–37 provides a ligand contact to ATP; the sequence is MGYFHEGH. The active-site Proton donor is the histidine 37. A (R)-pantoate-binding site is contributed by glutamine 61. Residue glutamine 61 participates in beta-alanine binding. 147–150 is an ATP binding site; it reads GKKD. (R)-pantoate is bound at residue glutamine 153. 184–187 contributes to the ATP binding site; sequence MSSR.

This sequence belongs to the pantothenate synthetase family. Homodimer.

It is found in the cytoplasm. The enzyme catalyses (R)-pantoate + beta-alanine + ATP = (R)-pantothenate + AMP + diphosphate + H(+). It participates in cofactor biosynthesis; (R)-pantothenate biosynthesis; (R)-pantothenate from (R)-pantoate and beta-alanine: step 1/1. Its function is as follows. Catalyzes the condensation of pantoate with beta-alanine in an ATP-dependent reaction via a pantoyl-adenylate intermediate. The polypeptide is Pantothenate synthetase (Syntrophus aciditrophicus (strain SB)).